Consider the following 335-residue polypeptide: DNA-directed RNA polymerase subunit alpha (335 aa).

The alpha N-terminal domain (alpha-NTD) stretch occupies residues 1–233; the sequence is MTRTANEFLT…QQIAIFVDLQ (233 aa). The tract at residues 247–335 is alpha C-terminal domain (alpha-CTD); it reads VDPILLRPVD…MDDRFAYRSR (89 aa).

The protein belongs to the RNA polymerase alpha chain family. Homodimer. The RNAP catalytic core consists of 2 alpha, 1 beta, 1 beta' and 1 omega subunit. When a sigma factor is associated with the core the holoenzyme is formed, which can initiate transcription.

It catalyses the reaction RNA(n) + a ribonucleoside 5'-triphosphate = RNA(n+1) + diphosphate. Functionally, DNA-dependent RNA polymerase catalyzes the transcription of DNA into RNA using the four ribonucleoside triphosphates as substrates. In Acinetobacter baumannii (strain AB307-0294), this protein is DNA-directed RNA polymerase subunit alpha.